The following is a 256-amino-acid chain: Acetyl-coenzyme A carboxylase carboxyl transferase subunit alpha (256 aa).

The region spanning 1–236 is the CoA carboxyltransferase C-terminal domain; the sequence is MTDVSRVLKE…KANLIEQITS (236 aa).

It belongs to the AccA family. In terms of assembly, acetyl-CoA carboxylase is a heterohexamer composed of biotin carboxyl carrier protein (AccB), biotin carboxylase (AccC) and two subunits each of ACCase subunit alpha (AccA) and ACCase subunit beta (AccD).

Its subcellular location is the cytoplasm. It carries out the reaction N(6)-carboxybiotinyl-L-lysyl-[protein] + acetyl-CoA = N(6)-biotinyl-L-lysyl-[protein] + malonyl-CoA. It functions in the pathway lipid metabolism; malonyl-CoA biosynthesis; malonyl-CoA from acetyl-CoA: step 1/1. In terms of biological role, component of the acetyl coenzyme A carboxylase (ACC) complex. First, biotin carboxylase catalyzes the carboxylation of biotin on its carrier protein (BCCP) and then the CO(2) group is transferred by the carboxyltransferase to acetyl-CoA to form malonyl-CoA. This chain is Acetyl-coenzyme A carboxylase carboxyl transferase subunit alpha, found in Streptococcus pyogenes serotype M12 (strain MGAS2096).